A 217-amino-acid polypeptide reads, in one-letter code: Probable GTP-binding protein EngB (217 aa).

Residues 29 to 213 (GPSEVAFAGR…RQAIAQTVGI (185 aa)) form the EngB-type G domain. Residues 37 to 44 (GRSNVGKS), 64 to 68 (GRTQE), 91 to 94 (DMPG), 158 to 161 (TKTD), and 192 to 194 (TSS) contribute to the GTP site. Mg(2+) is bound by residues Ser-44 and Thr-66.

The protein belongs to the TRAFAC class TrmE-Era-EngA-EngB-Septin-like GTPase superfamily. EngB GTPase family. Mg(2+) is required as a cofactor.

Its function is as follows. Necessary for normal cell division and for the maintenance of normal septation. The polypeptide is Probable GTP-binding protein EngB (Rhizobium etli (strain CIAT 652)).